The primary structure comprises 73 residues: Protein SlyX homolog (73 aa).

Belongs to the SlyX family.

In Haemophilus ducreyi (strain 35000HP / ATCC 700724), this protein is Protein SlyX homolog.